The sequence spans 426 residues: Elongation factor 1-alpha (426 aa).

One can recognise a tr-type G domain in the interval lysine 5–threonine 221. The G1 stretch occupies residues glycine 14–serine 21. Glycine 14–serine 21 contacts GTP. Serine 21 provides a ligand contact to Mg(2+). The interval glycine 70–aspartate 74 is G2. The G3 stretch occupies residues aspartate 91–glycine 94. GTP is bound by residues aspartate 91–histidine 95 and asparagine 146–aspartate 149. Positions asparagine 146 to aspartate 149 are G4. Residues serine 185–phenylalanine 187 are G5.

Belongs to the TRAFAC class translation factor GTPase superfamily. Classic translation factor GTPase family. EF-Tu/EF-1A subfamily.

It localises to the cytoplasm. It carries out the reaction GTP + H2O = GDP + phosphate + H(+). GTP hydrolase that promotes the GTP-dependent binding of aminoacyl-tRNA to the A-site of ribosomes during protein biosynthesis. This Methanosphaerula palustris (strain ATCC BAA-1556 / DSM 19958 / E1-9c) protein is Elongation factor 1-alpha.